The following is a 90-amino-acid chain: Probable Fe(2+)-trafficking protein (90 aa).

The protein belongs to the Fe(2+)-trafficking protein family. In terms of assembly, monomer.

Its function is as follows. Could be a mediator in iron transactions between iron acquisition and iron-requiring processes, such as synthesis and/or repair of Fe-S clusters in biosynthetic enzymes. This chain is Probable Fe(2+)-trafficking protein, found in Pectobacterium carotovorum subsp. carotovorum (strain PC1).